A 269-amino-acid polypeptide reads, in one-letter code: Shikimate dehydrogenase (NADP(+)) (269 aa).

Shikimate contacts are provided by residues 22-24 (TLS) and T68. K72 acts as the Proton acceptor in catalysis. Residues N93 and D104 each coordinate shikimate. NADP(+) contacts are provided by residues 128 to 132 (GAGGA), 152 to 157 (NRTKSR), and F210. Y212 serves as a coordination point for shikimate. G233 provides a ligand contact to NADP(+).

Belongs to the shikimate dehydrogenase family. As to quaternary structure, homodimer.

It catalyses the reaction shikimate + NADP(+) = 3-dehydroshikimate + NADPH + H(+). It participates in metabolic intermediate biosynthesis; chorismate biosynthesis; chorismate from D-erythrose 4-phosphate and phosphoenolpyruvate: step 4/7. Its function is as follows. Involved in the biosynthesis of the chorismate, which leads to the biosynthesis of aromatic amino acids. Catalyzes the reversible NADPH linked reduction of 3-dehydroshikimate (DHSA) to yield shikimate (SA). This Saccharolobus solfataricus (strain ATCC 35092 / DSM 1617 / JCM 11322 / P2) (Sulfolobus solfataricus) protein is Shikimate dehydrogenase (NADP(+)).